A 270-amino-acid polypeptide reads, in one-letter code: Ethanolamine ammonia-lyase small subunit (270 aa).

Adenosylcob(III)alamin contacts are provided by V166, E187, and C216.

Belongs to the EutC family. As to quaternary structure, the basic unit is a heterodimer which dimerizes to form tetramers. The heterotetramers trimerize; 6 large subunits form a core ring with 6 small subunits projecting outwards. Requires adenosylcob(III)alamin as cofactor.

It is found in the bacterial microcompartment. The enzyme catalyses ethanolamine = acetaldehyde + NH4(+). Its pathway is amine and polyamine degradation; ethanolamine degradation. Functionally, catalyzes the deamination of various vicinal amino-alcohols to oxo compounds. Allows this organism to utilize ethanolamine as the sole source of nitrogen and carbon in the presence of external vitamin B12. This Ralstonia nicotianae (strain ATCC BAA-1114 / GMI1000) (Ralstonia solanacearum) protein is Ethanolamine ammonia-lyase small subunit.